Reading from the N-terminus, the 380-residue chain is MEEIYAKFVSQKISKTRWRPLPPGSLQTAETFATGSWDNEENYISLWSIGDFGNLDSDGGFEGDHQLLCDIRHHGDVMDLQFFDQERIVAASSTGCVTVFLHHPNNQTLSVNQQWTTAHYHTGPGSPSYSSAPCTGVVCNNPEIVTVGEDGRINLFRADHKEAVRTIDNADSSTLHAVTFLRTPEILTVNSIGQLKIWDFRQQGNEPSQILSLTGDRVPLHCVDRHPNQQHVVATGGQDGMLSIWDVRQGTMPVSLLKAHEAEMWEVHFHPSNPEHLFTCSEDGSLWHWDASTDVPEKSSLFHQGGRSSTFLSHSISNQANVHQSVISSWLSTDPAKDRIEITSLLPSRSLSVNTLDVLGPCLVCGTDAEAIYVTRHLFS.

Methionine 1 bears the N-acetylmethionine mark. WD repeat units follow at residues 8-57, 72-110, 127-166, 170-208, 215-255, and 259-299; these read FVSQ…NLDS, RHHG…QTLS, PSYS…AVRT, ADSS…NEPS, GDRV…MPVS, and AHEA…PEKS.

In terms of assembly, component of the Nup107-160 subcomplex of the nuclear pore complex (NPC). The Nup107-160 subcomplex includes NUP160, NUP133, NUP107, NUP98, NUP85, NUP43, NUP37, SEH1 and SEC13.

It localises to the chromosome. The protein resides in the centromere. It is found in the kinetochore. Its subcellular location is the nucleus. The protein localises to the nuclear pore complex. Its function is as follows. Component of the Nup107-160 subcomplex of the nuclear pore complex (NPC). The Nup107-160 subcomplex is required for the assembly of a functional NPC. The Nup107-160 subcomplex is also required for normal kinetochore microtubule attachment, mitotic progression and chromosome segregation. The chain is Nucleoporin Nup43 (NUP43) from Homo sapiens (Human).